Reading from the N-terminus, the 330-residue chain is Methionyl-tRNA formyltransferase (330 aa).

Residue 121 to 124 coordinates (6S)-5,6,7,8-tetrahydrofolate; sequence SLLP.

This sequence belongs to the Fmt family.

The catalysed reaction is L-methionyl-tRNA(fMet) + (6R)-10-formyltetrahydrofolate = N-formyl-L-methionyl-tRNA(fMet) + (6S)-5,6,7,8-tetrahydrofolate + H(+). Functionally, attaches a formyl group to the free amino group of methionyl-tRNA(fMet). The formyl group appears to play a dual role in the initiator identity of N-formylmethionyl-tRNA by promoting its recognition by IF2 and preventing the misappropriation of this tRNA by the elongation apparatus. This is Methionyl-tRNA formyltransferase from Burkholderia cenocepacia (strain ATCC BAA-245 / DSM 16553 / LMG 16656 / NCTC 13227 / J2315 / CF5610) (Burkholderia cepacia (strain J2315)).